A 606-amino-acid chain; its full sequence is NADH-ubiquinone oxidoreductase chain 5 (606 aa).

A run of 16 helical transmembrane segments spans residues Met1–Val21, Tyr35–Leu55, Leu87–Tyr107, Ile114–Ala134, Leu140–Gly160, Ala171–Ser191, Phe211–Leu233, Thr241–Val261, Leu272–Ala292, Ile301–Asn320, Ala325–Ile347, Leu366–Leu386, Leu413–Gly433, Leu457–Thr477, Met482–Phe502, and Gly582–Phe602.

The protein belongs to the complex I subunit 5 family. As to quaternary structure, core subunit of respiratory chain NADH dehydrogenase (Complex I) which is composed of 45 different subunits.

Its subcellular location is the mitochondrion inner membrane. The catalysed reaction is a ubiquinone + NADH + 5 H(+)(in) = a ubiquinol + NAD(+) + 4 H(+)(out). In terms of biological role, core subunit of the mitochondrial membrane respiratory chain NADH dehydrogenase (Complex I) which catalyzes electron transfer from NADH through the respiratory chain, using ubiquinone as an electron acceptor. Essential for the catalytic activity and assembly of complex I. The polypeptide is NADH-ubiquinone oxidoreductase chain 5 (MT-ND5) (Balaenoptera musculus (Blue whale)).